The sequence spans 128 residues: Lysozyme C-1 (128 aa).

The 128-residue stretch at 1–128 (KVYDRCEFAR…VSQYIRGCKL (128 aa)) folds into the C-type lysozyme domain. Intrachain disulfides connect C6–C126, C30–C114, C63–C79, and C75–C93. Catalysis depends on residues E35 and D51.

This sequence belongs to the glycosyl hydrolase 22 family. As to quaternary structure, monomer.

It localises to the secreted. The enzyme catalyses Hydrolysis of (1-&gt;4)-beta-linkages between N-acetylmuramic acid and N-acetyl-D-glucosamine residues in a peptidoglycan and between N-acetyl-D-glucosamine residues in chitodextrins.. Lysozymes have primarily a bacteriolytic function; those in tissues and body fluids are associated with the monocyte-macrophage system and enhance the activity of immunoagents. The polypeptide is Lysozyme C-1 (Sus scrofa (Pig)).